Consider the following 938-residue polypeptide: Isoleucine--tRNA ligase (938 aa).

Residues proline 58–histidine 68 carry the 'HIGH' region motif. Lysine 183 carries the post-translational modification N6-acetyllysine. Glutamate 561 contacts L-isoleucyl-5'-AMP. A 'KMSKS' region motif is present at residues lysine 602 to serine 606. Lysine 605 lines the ATP pocket. Positions 901, 904, 921, and 924 each coordinate Zn(2+).

Belongs to the class-I aminoacyl-tRNA synthetase family. IleS type 1 subfamily. Monomer. Zn(2+) is required as a cofactor.

The protein localises to the cytoplasm. The enzyme catalyses tRNA(Ile) + L-isoleucine + ATP = L-isoleucyl-tRNA(Ile) + AMP + diphosphate. In terms of biological role, catalyzes the attachment of isoleucine to tRNA(Ile). As IleRS can inadvertently accommodate and process structurally similar amino acids such as valine, to avoid such errors it has two additional distinct tRNA(Ile)-dependent editing activities. One activity is designated as 'pretransfer' editing and involves the hydrolysis of activated Val-AMP. The other activity is designated 'posttransfer' editing and involves deacylation of mischarged Val-tRNA(Ile). The protein is Isoleucine--tRNA ligase of Escherichia coli (strain ATCC 8739 / DSM 1576 / NBRC 3972 / NCIMB 8545 / WDCM 00012 / Crooks).